The primary structure comprises 262 residues: Acyl-[acyl-carrier-protein]--UDP-N-acetylglucosamine O-acyltransferase (262 aa).

Belongs to the transferase hexapeptide repeat family. LpxA subfamily. As to quaternary structure, homotrimer.

It is found in the cytoplasm. It carries out the reaction a (3R)-hydroxyacyl-[ACP] + UDP-N-acetyl-alpha-D-glucosamine = a UDP-3-O-[(3R)-3-hydroxyacyl]-N-acetyl-alpha-D-glucosamine + holo-[ACP]. The protein operates within glycolipid biosynthesis; lipid IV(A) biosynthesis; lipid IV(A) from (3R)-3-hydroxytetradecanoyl-[acyl-carrier-protein] and UDP-N-acetyl-alpha-D-glucosamine: step 1/6. Its function is as follows. Involved in the biosynthesis of lipid A, a phosphorylated glycolipid that anchors the lipopolysaccharide to the outer membrane of the cell. The polypeptide is Acyl-[acyl-carrier-protein]--UDP-N-acetylglucosamine O-acyltransferase (Burkholderia vietnamiensis (strain G4 / LMG 22486) (Burkholderia cepacia (strain R1808))).